The sequence spans 204 residues: Ras-related protein R-Ras2 (204 aa).

The residue at position 2 (Ala2) is an N-acetylalanine. Position 21–29 (21–29 (GGGGVGKSA)) interacts with GTP. Residues 43-51 (YDPTIEDSY) carry the Effector region motif. GTP is bound by residues 68–72 (DTAGQ), 127–130 (NKAD), and 157–159 (SAK). Position 186 is a phosphoserine (Ser186). N6-palmitoyl lysine attachment occurs at residues Lys192, Lys194, Lys196, and Lys197. Residue Cys199 is the site of S-palmitoyl cysteine attachment. Cys201 is subject to Cysteine methyl ester. Cys201 carries S-farnesyl cysteine lipidation. The propeptide at 202–204 (VIF) is removed in mature form.

It belongs to the small GTPase superfamily. Ras family. As to quaternary structure, interacts with RASSF5. In terms of processing, may be post-translationally modified by both palmitoylation and polyisoprenylation. Fatty-acylation at Lys-192, Lys-194; lys-196 and Lys-197 is required for localization to the plasma membrane and activity. Defatty-acylated by SIRT6, affecting its localization to the plasma membrane. In terms of tissue distribution, ubiquitously present in all tissues examined, with the highest levels in heart, placenta, and skeletal muscle. Moderate levels in lung and liver; low levels in brain, kidney, and pancreas.

It localises to the cell membrane. The protein localises to the golgi apparatus membrane. It carries out the reaction GTP + H2O = GDP + phosphate + H(+). Its function is as follows. GTP-binding protein with GTPase activity, involved in the regulation of MAPK signaling pathway and thereby controlling multiple cellular processes. Regulates craniofacial development. The protein is Ras-related protein R-Ras2 of Homo sapiens (Human).